The chain runs to 916 residues: Translation initiation factor IF-2 (916 aa).

Positions 151–191 (NLDEQQRLAESDRARDEAIQRKRDEEQAAKDRVEAERKAAE) are enriched in basic and acidic residues. Disordered regions lie at residues 151 to 262 (NLDE…SHVM) and 280 to 328 (HLSA…ERPT). 2 stretches are compositionally biased toward low complexity: residues 192-243 (EAAA…ATPA) and 293-305 (RGKPTGRPGSSSS). A tr-type G domain is found at 415-584 (SRPPVVTIMG…SLQAEVLELK (170 aa)). Residues 424–431 (GHVDHGKT) are G1. Residue 424-431 (GHVDHGKT) participates in GTP binding. The segment at 449–453 (GITQH) is G2. The segment at 470–473 (DTPG) is G3. GTP-binding positions include 470-474 (DTPGH) and 524-527 (NKID). Positions 524–527 (NKID) are G4. Positions 560 to 562 (SAK) are G5.

The protein belongs to the TRAFAC class translation factor GTPase superfamily. Classic translation factor GTPase family. IF-2 subfamily.

It localises to the cytoplasm. Its function is as follows. One of the essential components for the initiation of protein synthesis. Protects formylmethionyl-tRNA from spontaneous hydrolysis and promotes its binding to the 30S ribosomal subunits. Also involved in the hydrolysis of GTP during the formation of the 70S ribosomal complex. The polypeptide is Translation initiation factor IF-2 (Xanthomonas campestris pv. campestris (strain ATCC 33913 / DSM 3586 / NCPPB 528 / LMG 568 / P 25)).